The sequence spans 1339 residues: Inhibitor of Bruton tyrosine kinase (1339 aa).

ANK repeat units follow at residues 51–81, 86–115, and 119–154; these read FGRN…DLAV, SGWT…NLYI, and DGYT…NVNF. 3 RCC1 repeats span residues 142–195, 196–247, and 249–302; these read PTEL…FLSQ, KGQV…VLTE, and GYVY…LWTK. Positions 555-636 constitute a BTB 1 domain; sequence HDVTFQVGTK…IYSDTCDMLL (82 aa). A disordered region spans residues 685–704; it reads EKQKGKTKQSKKTRSIGDET. Positions 689–698 are enriched in basic residues; sequence GKTKQSKKTR. Residues 758 to 826 form the BTB 2 domain; the sequence is YDVMMKSEDG…IYTDEVLTVK (69 aa). Over residues 970–980 the composition is skewed to basic residues; sequence SKAKPKKKQRK. Disordered regions lie at residues 970-993, 1058-1089, and 1208-1237; these read SKAK…LSDI, RSSP…SRIT, and FPSL…SGTL. Over residues 1214–1231 the composition is skewed to basic and acidic residues; that stretch reads DVKKSKHTEELDPSELAR.

Its subcellular location is the cytoplasm. The protein localises to the membrane. In terms of biological role, acts as an inhibitor of BTK tyrosine kinase activity, thereby playing a role in B-cell development. This is Inhibitor of Bruton tyrosine kinase (ibtk) from Xenopus laevis (African clawed frog).